Consider the following 130-residue polypeptide: Small ribosomal subunit protein uS9 (130 aa).

The tract at residues 109-130 (RMKERKKYGLKKARRAPQFSKR) is disordered. Basic residues predominate over residues 111 to 130 (KERKKYGLKKARRAPQFSKR).

Belongs to the universal ribosomal protein uS9 family.

The chain is Small ribosomal subunit protein uS9 from Clostridium kluyveri (strain NBRC 12016).